We begin with the raw amino-acid sequence, 460 residues long: Proline--tRNA ligase (460 aa).

The protein belongs to the class-II aminoacyl-tRNA synthetase family. ProS type 3 subfamily. As to quaternary structure, homodimer.

The protein localises to the cytoplasm. The enzyme catalyses tRNA(Pro) + L-proline + ATP = L-prolyl-tRNA(Pro) + AMP + diphosphate. Its function is as follows. Catalyzes the attachment of proline to tRNA(Pro) in a two-step reaction: proline is first activated by ATP to form Pro-AMP and then transferred to the acceptor end of tRNA(Pro). This Methanococcus maripaludis (strain C6 / ATCC BAA-1332) protein is Proline--tRNA ligase.